A 206-amino-acid chain; its full sequence is FMN-dependent NADH:quinone oxidoreductase (206 aa).

FMN-binding positions include 15 to 17 (SVS), 94 to 97 (MYNF), and 138 to 141 (TRGG).

It belongs to the azoreductase type 1 family. In terms of assembly, homodimer. The cofactor is FMN.

It catalyses the reaction 2 a quinone + NADH + H(+) = 2 a 1,4-benzosemiquinone + NAD(+). The enzyme catalyses N,N-dimethyl-1,4-phenylenediamine + anthranilate + 2 NAD(+) = 2-(4-dimethylaminophenyl)diazenylbenzoate + 2 NADH + 2 H(+). Quinone reductase that provides resistance to thiol-specific stress caused by electrophilic quinones. In terms of biological role, also exhibits azoreductase activity. Catalyzes the reductive cleavage of the azo bond in aromatic azo compounds to the corresponding amines. The polypeptide is FMN-dependent NADH:quinone oxidoreductase (Rhizobium meliloti (strain 1021) (Ensifer meliloti)).